The primary structure comprises 459 residues: UNC93-like protein 1 (459 aa).

The interval 1-26 (MNVRDEGKTTAEKHGGGEENKSPENK) is disordered. Transmembrane regions (helical) follow at residues 38 to 58 (LMGF…GMGG), 73 to 93 (AVYT…NVLG), 96 to 116 (LTLA…LYYN), 122 to 142 (AFAI…WAGE), 159 to 179 (IALF…IPFI), 195 to 215 (YIAF…ILPA), 251 to 271 (LLIV…FNNV), 287 to 307 (FYWG…DFSF), 314 to 334 (GFTG…GGLA), 355 to 375 (GIEF…DAMY), and 425 to 445 (LIVN…LVYF).

The protein belongs to the unc-93 family.

The protein localises to the membrane. The polypeptide is UNC93-like protein 1 (Arabidopsis thaliana (Mouse-ear cress)).